We begin with the raw amino-acid sequence, 97 residues long: Plastocyanin A/B (97 aa).

A Plastocyanin-like domain is found at 1-97 (AEVKLGSDDG…AGMKGEVTVN (97 aa)). Cu cation contacts are provided by histidine 37, cysteine 82, histidine 85, and methionine 90.

Belongs to the plastocyanin family. Requires Cu(2+) as cofactor.

It localises to the plastid. The protein localises to the chloroplast thylakoid membrane. Participates in electron transfer between P700 and the cytochrome b6-f complex in photosystem I. The polypeptide is Plastocyanin A/B (PETE) (Petroselinum crispum (Parsley)).